The primary structure comprises 364 residues: MKEDSPPTVCVTGAAGFIGSWLVMRLLERGYIVRATVRNPGDMKKVKHLLELPKAETNLTLWKADLTQEGSFDEAIEGCHGVFHVATPMDFESKDPENEIIKPTIEGILSIIRSCAKAKTVKKLVYTSSAGTVNVQETQLPVYDESHWSDLDFIYSKKMTAWMYFVSKTLAEKAAMEAAKENNIDFVSIIPPLVVGPFINPTFPPSLITALSLINGAESHYSIIKQGQYVHLDDLCECHIFLYENPEAKGRYICSKQDATIHQLARMIKQKWPEYHVPTQFAGIDEELPTVSFSSKKLIDMGFKFKYDLEDMFKGAIDSCKEKGFLPYSTNEVKKGLFESSINGNVHGQKGNQKIGDEGVKLVN.

Residues Lys-45 and Tyr-164 each coordinate NADP(+).

It belongs to the NAD(P)-dependent epimerase/dehydratase family. Dihydroflavonol-4-reductase subfamily.

It catalyses the reaction a (2R,3S,4S)-leucoanthocyanidin + NADP(+) = a (2R,3R)-dihydroflavonol + NADPH + H(+). It carries out the reaction (2S)-flavan-4-ol + NADP(+) = (2S)-flavanone + NADPH + H(+). The protein operates within pigment biosynthesis; anthocyanin biosynthesis. In terms of biological role, bifunctional enzyme involved in flavonoid metabolism. The polypeptide is Dihydroflavonol 4-reductase (F) (Callistephus chinensis (China aster)).